The sequence spans 186 residues: Elongation factor P (186 aa).

Belongs to the elongation factor P family.

The protein resides in the cytoplasm. It participates in protein biosynthesis; polypeptide chain elongation. Involved in peptide bond synthesis. Stimulates efficient translation and peptide-bond synthesis on native or reconstituted 70S ribosomes in vitro. Probably functions indirectly by altering the affinity of the ribosome for aminoacyl-tRNA, thus increasing their reactivity as acceptors for peptidyl transferase. The chain is Elongation factor P from Prochlorococcus marinus (strain MIT 9313).